The sequence spans 423 residues: Replication factor C large subunit (423 aa).

50 to 57 lines the ATP pocket; that stretch reads GPAGCGKT.

This sequence belongs to the activator 1 small subunits family. RfcL subfamily. Heteromultimer composed of small subunits (RfcS) and large subunits (RfcL).

In terms of biological role, part of the RFC clamp loader complex which loads the PCNA sliding clamp onto DNA. This is Replication factor C large subunit from Staphylothermus marinus (strain ATCC 43588 / DSM 3639 / JCM 9404 / F1).